The chain runs to 263 residues: NADH dehydrogenase [ubiquinone] iron-sulfur protein 3, mitochondrial (263 aa).

Residues Met1–Arg35 constitute a mitochondrion transit peptide.

It belongs to the complex I 30 kDa subunit family. As to quaternary structure, core subunit of respiratory chain NADH dehydrogenase (Complex I) which is composed of 45 different subunits. Interacts with NDUFAF3. Interacts with RAB5IF. Found in subcomplexes containing subunits NDUFS2, MT-ND1 and NDUFA13.

The protein resides in the mitochondrion inner membrane. It carries out the reaction a ubiquinone + NADH + 5 H(+)(in) = a ubiquinol + NAD(+) + 4 H(+)(out). In terms of biological role, core subunit of the mitochondrial membrane respiratory chain NADH dehydrogenase (Complex I) which catalyzes electron transfer from NADH through the respiratory chain, using ubiquinone as an electron acceptor. Essential for the catalytic activity and assembly of complex I. The protein is NADH dehydrogenase [ubiquinone] iron-sulfur protein 3, mitochondrial (NDUFS3) of Pongo pygmaeus (Bornean orangutan).